We begin with the raw amino-acid sequence, 401 residues long: uncharacterized protein (401 aa).

K242 is modified (N6-(pyridoxal phosphate)lysine).

The protein belongs to the class-I pyridoxal-phosphate-dependent aminotransferase family. Homodimer. It depends on pyridoxal 5'-phosphate as a cofactor.

It localises to the cytoplasm. This is an uncharacterized protein from Saccharolobus solfataricus (strain ATCC 35092 / DSM 1617 / JCM 11322 / P2) (Sulfolobus solfataricus).